The chain runs to 799 residues: Heat shock protein 90-6, mitochondrial (799 aa).

The transit peptide at 1-48 directs the protein to the mitochondrion; that stretch reads MIRLSKRSVSTLLRSGNQSFRIAAAASTSRSSPSATDVKRSDTESRWY. Low complexity predominate over residues 23–35; it reads AAAASTSRSSPSA. The tract at residues 23 to 61 is disordered; sequence AAAASTSRSSPSATDVKRSDTESRWYSSLTNGQSKNSGS. The segment covering 46–61 has biased composition (polar residues); sequence RWYSSLTNGQSKNSGS. Residues Glu124, Asn128, Asp170, Met175, 190–191, 214–219, and Thr269 contribute to the ATP site; these read SG and QFGVGF. Residues 314 to 337 form a disordered region; sequence EVEVEDDPTETKKDDQDDQTEKKK. Residues 322 to 334 are compositionally biased toward basic and acidic residues; the sequence is TETKKDDQDDQTE. An ATP-binding site is contributed by Arg464. A compositionally biased stretch (polar residues) spans 766–777; sequence SPEVQPQQQQMA. The tract at residues 766 to 799 is disordered; that stretch reads SPEVQPQQQQMAHSHDAETFEAEVVEPVEVDGKK. The span at 784–799 shows a compositional bias: acidic residues; sequence TFEAEVVEPVEVDGKK.

Belongs to the heat shock protein 90 family. In terms of assembly, interacts with P23-1.

It localises to the mitochondrion. In terms of biological role, molecular chaperone which stabilizes unfolding protein intermediates and functions as a folding molecular chaperone that assists the non-covalent folding of proteins in an ATP-dependent manner. In Arabidopsis thaliana (Mouse-ear cress), this protein is Heat shock protein 90-6, mitochondrial.